Here is a 193-residue protein sequence, read N- to C-terminus: ATP-dependent Clp protease proteolytic subunit (193 aa).

The active-site Nucleophile is serine 97. The active site involves histidine 122.

Belongs to the peptidase S14 family. As to quaternary structure, fourteen ClpP subunits assemble into 2 heptameric rings which stack back to back to give a disk-like structure with a central cavity, resembling the structure of eukaryotic proteasomes.

It is found in the cytoplasm. The catalysed reaction is Hydrolysis of proteins to small peptides in the presence of ATP and magnesium. alpha-casein is the usual test substrate. In the absence of ATP, only oligopeptides shorter than five residues are hydrolyzed (such as succinyl-Leu-Tyr-|-NHMec, and Leu-Tyr-Leu-|-Tyr-Trp, in which cleavage of the -Tyr-|-Leu- and -Tyr-|-Trp bonds also occurs).. Its function is as follows. Cleaves peptides in various proteins in a process that requires ATP hydrolysis. Has a chymotrypsin-like activity. Plays a major role in the degradation of misfolded proteins. The sequence is that of ATP-dependent Clp protease proteolytic subunit from Fusobacterium nucleatum subsp. nucleatum (strain ATCC 25586 / DSM 15643 / BCRC 10681 / CIP 101130 / JCM 8532 / KCTC 2640 / LMG 13131 / VPI 4355).